Consider the following 301-residue polypeptide: Phosphoribosylaminoimidazole-succinocarboxamide synthase (301 aa).

It belongs to the SAICAR synthetase family.

It carries out the reaction 5-amino-1-(5-phospho-D-ribosyl)imidazole-4-carboxylate + L-aspartate + ATP = (2S)-2-[5-amino-1-(5-phospho-beta-D-ribosyl)imidazole-4-carboxamido]succinate + ADP + phosphate + 2 H(+). It functions in the pathway purine metabolism; IMP biosynthesis via de novo pathway; 5-amino-1-(5-phospho-D-ribosyl)imidazole-4-carboxamide from 5-amino-1-(5-phospho-D-ribosyl)imidazole-4-carboxylate: step 1/2. In Mycolicibacterium vanbaalenii (strain DSM 7251 / JCM 13017 / BCRC 16820 / KCTC 9966 / NRRL B-24157 / PYR-1) (Mycobacterium vanbaalenii), this protein is Phosphoribosylaminoimidazole-succinocarboxamide synthase.